Consider the following 247-residue polypeptide: tRNA pseudouridine synthase A (247 aa).

The Nucleophile role is filled by aspartate 53. Residue tyrosine 111 participates in substrate binding.

It belongs to the tRNA pseudouridine synthase TruA family. In terms of assembly, homodimer.

The catalysed reaction is uridine(38/39/40) in tRNA = pseudouridine(38/39/40) in tRNA. Its function is as follows. Formation of pseudouridine at positions 38, 39 and 40 in the anticodon stem and loop of transfer RNAs. The polypeptide is tRNA pseudouridine synthase A (Lacticaseibacillus casei (strain BL23) (Lactobacillus casei)).